Consider the following 127-residue polypeptide: Small ribosomal subunit protein uS13 (127 aa).

Residues 93 to 127 (RRSLPVRGQRTHTNARTRKGPRRGTVAGKKKATKT) form a disordered region.

It belongs to the universal ribosomal protein uS13 family. As to quaternary structure, part of the 30S ribosomal subunit. Forms a loose heterodimer with protein S19. Forms two bridges to the 50S subunit in the 70S ribosome.

Its function is as follows. Located at the top of the head of the 30S subunit, it contacts several helices of the 16S rRNA. In the 70S ribosome it contacts the 23S rRNA (bridge B1a) and protein L5 of the 50S subunit (bridge B1b), connecting the 2 subunits; these bridges are implicated in subunit movement. Contacts the tRNAs in the A and P-sites. This Acidobacterium capsulatum (strain ATCC 51196 / DSM 11244 / BCRC 80197 / JCM 7670 / NBRC 15755 / NCIMB 13165 / 161) protein is Small ribosomal subunit protein uS13.